Here is a 190-residue protein sequence, read N- to C-terminus: Protein GrpE (190 aa).

The span at 1–18 shows a compositional bias: polar residues; the sequence is MTETPNTSSEEIQTSEPS. The segment at 1-21 is disordered; it reads MTETPNTSSEEIQTSEPSPDN.

The protein belongs to the GrpE family. As to quaternary structure, homodimer.

The protein localises to the cytoplasm. In terms of biological role, participates actively in the response to hyperosmotic and heat shock by preventing the aggregation of stress-denatured proteins, in association with DnaK and GrpE. It is the nucleotide exchange factor for DnaK and may function as a thermosensor. Unfolded proteins bind initially to DnaJ; upon interaction with the DnaJ-bound protein, DnaK hydrolyzes its bound ATP, resulting in the formation of a stable complex. GrpE releases ADP from DnaK; ATP binding to DnaK triggers the release of the substrate protein, thus completing the reaction cycle. Several rounds of ATP-dependent interactions between DnaJ, DnaK and GrpE are required for fully efficient folding. The protein is Protein GrpE of Chlamydia trachomatis serovar L2b (strain UCH-1/proctitis).